The primary structure comprises 442 residues: MRLSRYFLPILKENPKEAEIVSHRLMLRSGMIRQQSAGIYSWLPIGLKVLNKVCTIIREEQNRAGANEILMPTIQSADLWRESGRYDAYGKEMLRIQDRQEREMLFGPTNEEMVTDIFRSYVRSYKDLPLNLYHIQWKFRDEVRPRFGVMRSREFLMKDAYSFDLDYEGAKMAYYRMFVSYLRTFARVGLQAIPMRADTGPIGGDLSHEFIILAETGESQVYCDRAYLDLAVPGADTDFRNDAQLTDIVTRWTTPYAATDEMHDEADWAKVKPESQVSARGIEVGHIFHFGTKYSEPMGAKVQGPDGKEHLVSMGSYGIGPSRLVAAAIEASHDDAGIIWPKAIAPFGAGIVNMKPGDEGCDGVSEKLYEALTNAGVDPLLDDKDERPGAKFATMDLIGLPTQVIVGPRGVAAGEVEVKDRKTGERQSLGIEAAINMLTAQA.

This sequence belongs to the class-II aminoacyl-tRNA synthetase family. ProS type 2 subfamily. In terms of assembly, homodimer.

The protein localises to the cytoplasm. The enzyme catalyses tRNA(Pro) + L-proline + ATP = L-prolyl-tRNA(Pro) + AMP + diphosphate. Functionally, catalyzes the attachment of proline to tRNA(Pro) in a two-step reaction: proline is first activated by ATP to form Pro-AMP and then transferred to the acceptor end of tRNA(Pro). The chain is Proline--tRNA ligase from Brucella suis (strain ATCC 23445 / NCTC 10510).